The sequence spans 263 residues: Rano class II histocompatibility antigen, B-1 beta chain (263 aa).

The signal sequence occupies residues 1–27 (MALQTPSFLLPAAVVVLMVLSSPGTEG). Positions 28-120 (RDSPRDFVYQ…SEVRTSLRRL (93 aa)) are beta-1. The Extracellular segment spans residues 28-224 (RDSPRDFVYQ…RAQSESAQSK (197 aa)). Cystine bridges form between Cys42–Cys104 and Cys143–Cys199. Residue Asn46 is glycosylated (N-linked (GlcNAc...) asparagine). Residues 121 to 214 (EQPNVAISLS…SLESPVTVEW (94 aa)) are beta-2. Residues 123–211 (PNVAISLSRT…DHPSLESPVT (89 aa)) form the Ig-like C1-type domain. The segment at 215 to 224 (RAQSESAQSK) is connecting peptide. The helical transmembrane segment at 225-245 (MLSGIGGFVLGVIFLGLGLFI) threads the bilayer. Over 246-263 (RHKRQKGPRGPPPAGLLQ) the chain is Cytoplasmic. Lys251 participates in a covalent cross-link: Glycyl lysine isopeptide (Lys-Gly) (interchain with G-Cter in ubiquitin).

It belongs to the MHC class II family.

It localises to the membrane. Involved in the presentation of foreign antigens to the immune system. The chain is Rano class II histocompatibility antigen, B-1 beta chain (RT1-Bb) from Rattus norvegicus (Rat).